Consider the following 284-residue polypeptide: MDVAKQFSSYLKQENKTENTVQGYTSGIRQYIKWFEGSYDRKLTKLYRQNILEYISYLKNVKMLNAKSINHKISSLAKFNEFLIQKGSQQDQVILKTDMIKVQTVYASPTQIVELDVKKFLQSVLEDNNKRNYAIATLLAYTGVRISEALSIKMNDFNLQTGECIIRSGKGGKQRIVLLNSKVLSAIKDYLIDRKTYSTAHESPYLFISKKREKLDRTVVNRIFKSYSNVITPHQLRHFFCTNAIEKGFSIHEVANQAGHSNIHTTLLYTNPNQLQLKNKMELL.

The 84-residue stretch at 1-84 folds into the Core-binding (CB) domain; sequence MDVAKQFSSY…SLAKFNEFLI (84 aa). Residues 107–282 enclose the Tyr recombinase domain; it reads ASPTQIVELD…NQLQLKNKME (176 aa). Residues Arg145, Lys170, His234, Arg237, and His260 contribute to the active site. Tyr269 functions as the O-(3'-phospho-DNA)-tyrosine intermediate in the catalytic mechanism.

Belongs to the 'phage' integrase family.

In terms of biological role, resolvase catalyzes the resolution (a site-specific recombination) of the cointegrated replicon to yield the final transposition products. The protein is TnP I resolvase (tnpI) of Bacillus thuringiensis.